Here is a 180-residue protein sequence, read N- to C-terminus: Large ribosomal subunit protein uL5 (180 aa).

Belongs to the universal ribosomal protein uL5 family. Part of the 50S ribosomal subunit; part of the 5S rRNA/L5/L18/L25 subcomplex. Contacts the 5S rRNA and the P site tRNA. Forms a bridge to the 30S subunit in the 70S ribosome.

Its function is as follows. This is one of the proteins that bind and probably mediate the attachment of the 5S RNA into the large ribosomal subunit, where it forms part of the central protuberance. In the 70S ribosome it contacts protein S13 of the 30S subunit (bridge B1b), connecting the 2 subunits; this bridge is implicated in subunit movement. Contacts the P site tRNA; the 5S rRNA and some of its associated proteins might help stabilize positioning of ribosome-bound tRNAs. In Xanthomonas oryzae pv. oryzae (strain MAFF 311018), this protein is Large ribosomal subunit protein uL5.